A 437-amino-acid chain; its full sequence is MSGLARLQRLQKFGFLMVSASANRPIQRYQCSRTEKPQKRTSANALLNHLIFKIKSTGPITVSEYMREVLTNPVKGYYMHNDMLGEHGDFVTSPEISQIFGELLGVWCISEWVSAGKPKAIQLVELGPGRGTLTDDLLRVFSNFGRLLDSCDISVHLVEVSPKLSDIQAQRLTGKSIEVELDSNSPVYKNGITKTGRPVCWYQDIQDVPNGYSFYIAHEFFDALPIHKLQKIKDGWREMLIDIDPKLPDKLRFVLGSNMSLVAKTFVQDDEPRDHVEVCPSAAVIIQKLAQQINSYGGAALIADYGHMGEKTDTFRGFRAHQLHDVLTDPGTADLTADVDFNFMRRMVGEAASCLGPVTQHVFLKNMGIDIRLKVLLEKSNDVTVQKQLIHGYNVLMNPDQMGQRFKFFSVVPHSRLKNTLKTKMPPVAGFSTLLMT.

The transit peptide at 1 to 42 (MSGLARLQRLQKFGFLMVSASANRPIQRYQCSRTEKPQKRTS) directs the protein to the mitochondrion.

The protein belongs to the NDUFAF7 family.

It is found in the mitochondrion. It catalyses the reaction L-arginyl-[protein] + 2 S-adenosyl-L-methionine = N(omega),N(omega)'-dimethyl-L-arginyl-[protein] + 2 S-adenosyl-L-homocysteine + 2 H(+). Its function is as follows. Arginine methyltransferase involved in the assembly or stability of mitochondrial NADH:ubiquinone oxidoreductase complex (complex I). Acts by mediating symmetric dimethylation of 'Arg-118' of ndufs2 after it assembles into the complex I, stabilizing the early intermediate complex. In Xenopus laevis (African clawed frog), this protein is Protein arginine methyltransferase NDUFAF7, mitochondrial.